The sequence spans 79 residues: Short neurotoxin 2 (79 aa).

Residues 1-21 (MKTLLLTLVMVTIMCLDLGYT) form the signal peptide. 4 disulfides stabilise this stretch: C24/C41, C34/C59, C63/C71, and C72/C77.

The protein belongs to the three-finger toxin family. Short-chain subfamily. Type III alpha-neurotoxin sub-subfamily. As to expression, expressed by the venom gland.

The protein localises to the secreted. Binds with high affinity to muscle nicotinic acetylcholine receptor (nAChR) and hinders acetylcholine binding to the receptor, thereby impairing neuromuscular transmission. Competes with the binding of alpha-bungarotoxin on muscle AChR (from Torpedo) with an IC(50) of 0.30 uM. Causes muscle paralysis, spasms and increased respiration. The chain is Short neurotoxin 2 from Pseudonaja textilis (Eastern brown snake).